The following is a 162-amino-acid chain: Ribosomal RNA large subunit methyltransferase H (162 aa).

S-adenosyl-L-methionine-binding residues include L78 and G110.

It belongs to the RNA methyltransferase RlmH family. Homodimer.

Its subcellular location is the cytoplasm. It carries out the reaction pseudouridine(1915) in 23S rRNA + S-adenosyl-L-methionine = N(3)-methylpseudouridine(1915) in 23S rRNA + S-adenosyl-L-homocysteine + H(+). Its function is as follows. Specifically methylates the pseudouridine at position 1915 (m3Psi1915) in 23S rRNA. The polypeptide is Ribosomal RNA large subunit methyltransferase H (Bradyrhizobium sp. (strain ORS 278)).